The sequence spans 403 residues: MHIKTLTVSQLNRYVKNTLDADFILNNASVKGEISNLKIHSSGHIYFSLKDGGSKINCVMFKSYAYNLKFALENGMDVVALGNVSVYEKEGSYQLYVKDIKREGIGDLYVAFEKLKEKLKEEGLFDDVHKKEIPKFSKKVGVITSPTGAVLKDIINVTKRRNKGIELLIYPALVQGTNASRTLIEGIKILNKVEDVDIIILARGGGSIEELWAFNNEELAYAVYNSKKPIITGVGHETDFTIVDFVSDRRAPTPSAAAEIAVFDREVLINEILNYKYNIKNSMENIIKEKRNYLNLYKQKIEANSPTNIIVNEYKNIDNLKELLNMKIEGKLNKEKNNLSRLSSLLEAHNPLNVLKKGYTLIEDEGNNLITEKEALKKLNKINIIFKDGRAKLSIEYIEEFLK.

Belongs to the XseA family. As to quaternary structure, heterooligomer composed of large and small subunits.

It localises to the cytoplasm. It carries out the reaction Exonucleolytic cleavage in either 5'- to 3'- or 3'- to 5'-direction to yield nucleoside 5'-phosphates.. In terms of biological role, bidirectionally degrades single-stranded DNA into large acid-insoluble oligonucleotides, which are then degraded further into small acid-soluble oligonucleotides. The polypeptide is Exodeoxyribonuclease 7 large subunit (Clostridium botulinum (strain Okra / Type B1)).